Reading from the N-terminus, the 246-residue chain is NAD(P)H-quinone oxidoreductase subunit K, organellar chromatophore (246 aa).

Positions 58, 59, 123, and 154 each coordinate [4Fe-4S] cluster.

Belongs to the complex I 20 kDa subunit family. NDH-1 is composed of 14 different subunits. Subunits nuoB, C, D, E, F, and G constitute the peripheral sector of the complex. It depends on [4Fe-4S] cluster as a cofactor.

The protein resides in the plastid. It localises to the organellar chromatophore thylakoid membrane. The catalysed reaction is a quinone + NADH + H(+) = a quinol + NAD(+). In terms of biological role, NDH-1 shuttles electrons from NADH, via FMN and iron-sulfur (Fe-S) centers, to quinones in the respiratory chain. Couples the redox reaction to proton translocation (for every two electrons transferred, four hydrogen ions are translocated across the cytoplasmic membrane), and thus conserves the redox energy in a proton gradient. This chain is NAD(P)H-quinone oxidoreductase subunit K, organellar chromatophore, found in Paulinella chromatophora.